The primary structure comprises 399 residues: MATTLATDVRLSIAHQTRFALRLRSAISSNPERAAGNVAFSPLSLHVALSLITAGAAATRDQLVAILGDGGAGDAKELNALAEQVVQFVLANESSTGGPRIAFANGIFVDASLSLKPSFEELAVCQYKAKTQSVDFQHKTLEAVGQVNSWVEQVTTGLIKQILPPGSVDNTTKLILGNALYFKGAWDQKFDESNTKCDSFHLLDGSSIQTQFMSSTKKQYISSSDNLKVLKLPYAKGHDKRQFSMYILLPGAQDGLWSLAKRLSTEPEFIENHIPKQTVEVGRFQLPKFKISYQFEASSLLRALGLQLPFSEEADLSEMVDSSQGLEISHVFHKSFVEVNEEGTEAGAATVAMGVAMSMPLKVDLVDFVANHPFLFLIREDIAGVVVFVGHVTNPLISA.

The segment at 36–56 (GNVAFSPLSLHVALSLITAGA) is signal for targeting protein Z4 into the ER lumen. The segment at 343 to 367 (GTEAGAATVAMGVAMSMPLKVDLVD) is RCL.

This sequence belongs to the serpin family. Highly expressed in embryo and endosperm. Is accumulated and stored in the endosperm, where it exists in a free and a bound form. Expressed in roots, coleoptiles, shoots and leaves.

A major component of the endosperm albumin, this protein acts as a storage protein during grain filling, contributing a substantial part of the grain's lysine. May have an inhibitory function during filling or germination. Inhibits cathepsin G in vitro. This is Serpin-Z4 (PAZ1) from Hordeum vulgare (Barley).